The sequence spans 931 residues: Protein translocase subunit SecA (931 aa).

ATP is bound by residues Q87, 105–109 (GEGKT), and D515. Zn(2+) contacts are provided by C915, C917, C926, and H927.

Belongs to the SecA family. In terms of assembly, monomer and homodimer. Part of the essential Sec protein translocation apparatus which comprises SecA, SecYEG and auxiliary proteins SecDF-YajC and YidC. Requires Zn(2+) as cofactor.

Its subcellular location is the cell inner membrane. It is found in the cytoplasm. It catalyses the reaction ATP + H2O + cellular proteinSide 1 = ADP + phosphate + cellular proteinSide 2.. Part of the Sec protein translocase complex. Interacts with the SecYEG preprotein conducting channel. Has a central role in coupling the hydrolysis of ATP to the transfer of proteins into and across the cell membrane, serving both as a receptor for the preprotein-SecB complex and as an ATP-driven molecular motor driving the stepwise translocation of polypeptide chains across the membrane. The polypeptide is Protein translocase subunit SecA (Burkholderia pseudomallei (strain 1106a)).